Consider the following 126-residue polypeptide: Glycine cleavage system H protein (126 aa).

The region spanning 22–104 (VAIIGITEYA…YEKAWMVKVE (83 aa)) is the Lipoyl-binding domain. At K63 the chain carries N6-lipoyllysine.

Belongs to the GcvH family. In terms of assembly, the glycine cleavage system is composed of four proteins: P, T, L and H. Requires (R)-lipoate as cofactor.

Its function is as follows. The glycine cleavage system catalyzes the degradation of glycine. The H protein shuttles the methylamine group of glycine from the P protein to the T protein. In terms of biological role, is also involved in protein lipoylation via its role as an octanoyl/lipoyl carrier protein intermediate. In Staphylococcus aureus (strain USA300), this protein is Glycine cleavage system H protein.